Consider the following 292-residue polypeptide: 4-hydroxy-tetrahydrodipicolinate synthase (292 aa).

Residue T45 coordinates pyruvate. The active-site Proton donor/acceptor is Y133. The active-site Schiff-base intermediate with substrate is K161. Pyruvate is bound at residue I203.

This sequence belongs to the DapA family. Homotetramer; dimer of dimers.

The protein resides in the cytoplasm. It catalyses the reaction L-aspartate 4-semialdehyde + pyruvate = (2S,4S)-4-hydroxy-2,3,4,5-tetrahydrodipicolinate + H2O + H(+). The protein operates within amino-acid biosynthesis; L-lysine biosynthesis via DAP pathway; (S)-tetrahydrodipicolinate from L-aspartate: step 3/4. Catalyzes the condensation of (S)-aspartate-beta-semialdehyde [(S)-ASA] and pyruvate to 4-hydroxy-tetrahydrodipicolinate (HTPA). The protein is 4-hydroxy-tetrahydrodipicolinate synthase of Klebsiella pneumoniae subsp. pneumoniae (strain ATCC 700721 / MGH 78578).